A 1156-amino-acid polypeptide reads, in one-letter code: Reverse gyrase 1 (1156 aa).

Residues 1-38 form an RG N-terminal-type zinc finger; it reads MLKVYYTFGCPNCGGPIDDEHLLAGVPCSKCLPGRVEN. Positions 10, 13, 28, and 31 each coordinate Zn(2+). ATP is bound by residues glutamine 86 and 103–110; that span reads APTGLGKT. The region spanning 90 to 277 is the Helicase ATP-binding domain; it reads IKRLAKSESF…ALRTLIGFEP (188 aa). Positions 184–187 match the DEAD box motif; that stretch reads DDSD. Residues 570–1156 form a topoisomerase I region; that stretch reads INIKTILLIV…VNSLKLDTNV (587 aa). Positions 574–736 constitute a Toprim domain; the sequence is TILLIVESPT…NIYRIKYHEI (163 aa). Glutamate 580 contributes to the Mg(2+) binding site. The segment at 655 to 682 adopts an RG C-terminal-type zinc-finger fold; sequence IYKCYNCGKTFTIKSNTCPYCGSVFISS. Residues cysteine 658, cysteine 661, cysteine 672, and cysteine 675 each coordinate Zn(2+). Aspartate 705 provides a ligand contact to Mg(2+). Residues 752 to 1143 form the Topo IA-type catalytic domain; it reads NMNLVKSQIV…DLHKEITQIS (392 aa). The active-site O-(5'-phospho-DNA)-tyrosine intermediate is tyrosine 895.

This sequence in the N-terminal section; belongs to the DEAD box helicase family. DDVD subfamily. The protein in the C-terminal section; belongs to the type IA topoisomerase family. Monomer. Zn(2+) serves as cofactor. The cofactor is Mg(2+).

The protein localises to the cytoplasm. The enzyme catalyses ATP + H2O = ADP + phosphate + H(+). Modifies the topological state of DNA by introducing positive supercoils in an ATP-dependent process, increasing the linking number in steps of +1. Binds to single-stranded DNA, transiently cleaves and then rejoins the ends, introducing a positive supercoil in the process. The scissile phosphodiester is attacked by the catalytic tyrosine of the enzyme, resulting in the formation of a DNA-(5'-phosphotyrosyl)-enzyme intermediate. Probably involved in rewinding DNA strands in regions of the chromosome that have opened up to allow replication, transcription, DNA repair and/or for DNA protection. This Sulfurisphaera tokodaii (strain DSM 16993 / JCM 10545 / NBRC 100140 / 7) (Sulfolobus tokodaii) protein is Reverse gyrase 1.